A 346-amino-acid polypeptide reads, in one-letter code: UDP-3-O-acylglucosamine N-acyltransferase (346 aa).

His240 serves as the catalytic Proton acceptor.

This sequence belongs to the transferase hexapeptide repeat family. LpxD subfamily. In terms of assembly, homotrimer.

The catalysed reaction is a UDP-3-O-[(3R)-3-hydroxyacyl]-alpha-D-glucosamine + a (3R)-hydroxyacyl-[ACP] = a UDP-2-N,3-O-bis[(3R)-3-hydroxyacyl]-alpha-D-glucosamine + holo-[ACP] + H(+). Its pathway is bacterial outer membrane biogenesis; LPS lipid A biosynthesis. In terms of biological role, catalyzes the N-acylation of UDP-3-O-acylglucosamine using 3-hydroxyacyl-ACP as the acyl donor. Is involved in the biosynthesis of lipid A, a phosphorylated glycolipid that anchors the lipopolysaccharide to the outer membrane of the cell. The sequence is that of UDP-3-O-acylglucosamine N-acyltransferase from Bacteroides fragilis (strain YCH46).